Here is a 364-residue protein sequence, read N- to C-terminus: DNA replication and repair protein RecF (364 aa).

30-37 (GANGSGKT) serves as a coordination point for ATP.

The protein belongs to the RecF family.

It localises to the cytoplasm. The RecF protein is involved in DNA metabolism; it is required for DNA replication and normal SOS inducibility. RecF binds preferentially to single-stranded, linear DNA. It also seems to bind ATP. This Sodalis glossinidius (strain morsitans) protein is DNA replication and repair protein RecF.